Here is a 1208-residue protein sequence, read N- to C-terminus: Defective chorion protein, FC125 isoform (1208 aa).

The first 19 residues, 1-19 (MRLFSLLPLLALLVVQAAG), serve as a signal peptide directing secretion. 3 disordered regions span residues 23–60 (VTSDDPATDAGSTTNSTTDTKPRIPSQDEILGQMPSIN), 184–212 (APAPAPAAAPPPAPAPAADPPAAPVPDAP), and 268–294 (PAQPAAAGTDAQASDISEVRVRPEDPY). Residues 32-41 (AGSTTNSTTD) are compositionally biased toward polar residues. Over residues 268 to 280 (PAQPAAAGTDAQA) the composition is skewed to low complexity. Repeat copies occupy residues 493-518 (QNPMMMQQRQWSEEQAKIQQNQQQIQ), 519-544 (QNPMMMQQRQWSEEQAKIQQNQQQIQ), 545-570 (QNPMMMQQRQWSEEQAKIQQNQQQIQ), 571-596 (QNPMMMQQRQWSEEQAKIQQNQQQIQ), and 597-622 (QNPMMVQQRQWSEEQAKIQQNQQQIQ). A 12 X 26 AA approximate tandem repeats, Glu, Met-rich region spans residues 493 to 788 (QNPMMMQQRQ…IQQQQRQMMQ (296 aa)). A 6; approximate repeat occupies 623 to 652 (QNPMMMQQRQWSEEQAKIQHDQQMAQQMAQ). Residues 653 to 680 (QGLMMTEQRQRQWSEDQAKIQQAQQMAQ) form a 7; approximate repeat. Residues 681 to 696 (QTPMMMPQMQQRQWTE) form an 8; approximate repeat. Residues 697 to 720 (DPQMVQQMQQRQWAEDQTRMQMAQ) form a 9; approximate repeat. The stretch at 721–733 (QNPMMQQQRQMAE) is one 10; approximate repeat. The 11; approximate repeat unit spans residues 734-758 (NPQMMQQRQWSEEQTKIEQAQQMAQ). Residues 759 to 788 (QNQMMMQQMQQRQWSEDQAQIQQQQRQMMQ) form a 12; approximate repeat. The segment covering 828–839 (EDEDNKAEDDLV) has biased composition (acidic residues). Disordered regions lie at residues 828–875 (EDED…SKSA), 944–1010 (RTIN…GSIF), and 1114–1208 (VQPP…DVDD). Polar residues predominate over residues 957 to 977 (SESQKSNSNPPTTLTPAPQEQ). Acidic residues-rich tracts occupy residues 1163-1178 (PEPDEEDDRDVEEPSE) and 1194-1208 (NDIDYFNFDDDDVDD).

The protein localises to the secreted. In terms of biological role, required for proper assembly of the eggshell. The chain is Defective chorion protein, FC125 isoform from Drosophila melanogaster (Fruit fly).